The chain runs to 68 residues: Coiled-coil domain-containing protein 179 (68 aa).

Positions Ser-11–Ser-68 are disordered. Positions Pro-18 to Glu-28 are enriched in basic and acidic residues. The stretch at Thr-27–Phe-53 forms a coiled coil. Basic residues predominate over residues His-41–Ser-54.

This is Coiled-coil domain-containing protein 179 (CCDC179) from Homo sapiens (Human).